We begin with the raw amino-acid sequence, 203 residues long: GTP-binding protein YPTM2 (203 aa).

GTP contacts are provided by residues 15 to 23, 33 to 40, 63 to 67, 121 to 124, and 151 to 153; these read GDSGVGKSC, YLDSYIST, DTAGQ, NKSD, and SAK. Positions 37–45 match the Effector region motif; it reads YISTIGVDF. S-geranylgeranyl cysteine attachment occurs at residues cysteine 200 and cysteine 201.

Belongs to the small GTPase superfamily. Rab family. Its expression is weak in stems, higher in roots, leaves and coleoptiles, but highest in flowers.

The protein localises to the cell membrane. In terms of biological role, protein transport. Probably involved in vesicular traffic. This chain is GTP-binding protein YPTM2 (YPTM2), found in Zea mays (Maize).